The sequence spans 591 residues: MSWLFGIKGPKGEGTGPPLPLPPAQPGAESGGDRGAGDRPSPKDKWSNFDPTGLERAAKAARELEHSRHAKEALNLAQMQEQTLQLEQQSKLKEYEAAVEQLKSEQIRVQAEERRKTLNEETRQHQARAQYQDKLARQRYEDQLKQQQLLNEENLRKQEESVQKQEAIRRATVEREMELRHKNEMLRVEAEARARAKADRENADIIREQIRLKAAEHRQTILESIRTAGTLFGEGFRAFVTDWDKVTATVAGLTLLAVGVYSAKNATSVAGRYIEARLGKPSLVRETSRISVLEALRHPIQVSRRLVSRPQDALEGVILSPSLEARVRDIAIATRNTKKNKSLYRNVLMYGPPGTGKTLFAKKLALHSGMDYAIMTGGDVAPMGREGVTAMHKVFDWASTSRRGLLLFVDEADAFLRKRATEKISEDLRATLNAFLHRTGQHSNKFMLVLASNQPEQFDWAINDRIDEMVCFALPQREERERLVRMYFDKYVLKPATEGKQRLKVAQFDYGKKCSEVAQLTAGMSGREIAQLAVAWQAMAYSSEDGVLTEAMMDARVQDAVQQHQQKMQWLKVERPDSEASKPPHPSLLSC.

Residues methionine 1–threonine 52 are disordered. Residue serine 2 is modified to N-acetylserine. The interval serine 2–phenylalanine 49 is required for interaction with the inner surface of the mitochondrial outer membrane. The Mitochondrial intermembrane segment spans residues serine 2–lysine 245. A compositionally biased stretch (basic and acidic residues) spans glycine 31–serine 47. Residues glutamate 55–glutamate 216 are a coiled coil. The chain crosses the membrane as a helical span at residues valine 246–alanine 263. Over lysine 264–cysteine 591 the chain is Mitochondrial matrix. The interval arginine 289–arginine 304 is S100B-binding. Glycine 351 to threonine 358 is an ATP binding site. Lysine 490 carries the post-translational modification N6-acetyllysine; alternate. The residue at position 490 (lysine 490) is an N6-succinyllysine; alternate. N6-acetyllysine occurs at positions 494 and 512.

It belongs to the AAA ATPase family. As to quaternary structure, can form homooligomers. Homodimer formation at the N-terminus may be regulated by ATP and is required for the interaction with the inner surface of the mitochondrial outer membrane and correct mitochondrial homeostasis. Interacts with components of the mitochondrial ribosome and with other proteins involved in mitochondrial RNA metabolism. May also interact with protein involved in lipid metabolism, including STARD9. May interact with FAM210A. Interacts with GADD45GIP1. Interacts with S100B in a Ca(+2)- and Zn(+2)-dependent manner; this interaction probably occurs in the cytosol prior to mitochondrial targeting. S100B could assist ATAD3A cytoplasmic processing, preventing aggregation and favoring mitochondrial localization. Interacts with HSP60/HSPD1. Interacts with CLPB. Interacts with EIF2AK3/PERK; ATAD3A and EIF2S1/eIF-2-alpha occupy a common binding site within the cytoplasmic loop of EIF2AK3/PERK, leading to prevent EIF2AK3/PERK association with its substrate EIF2S1/eIF-2-alpha.

The protein localises to the mitochondrion inner membrane. It is found in the mitochondrion matrix. It localises to the mitochondrion nucleoid. It catalyses the reaction ATP + H2O = ADP + phosphate + H(+). Essential for mitochondrial network organization, mitochondrial metabolism and cell growth at organism and cellular level. May play an important role in mitochondrial protein synthesis. May also participate in mitochondrial DNA replication. May bind to mitochondrial DNA D-loops and contribute to nucleoid stability. Required for enhanced channeling of cholesterol for hormone-dependent steroidogenesis. Involved in mitochondrial-mediated antiviral innate immunity. Required to protect mitochondria from the PERK-mediated unfolded protein response: specifically inhibits the activity of EIF2AK3/PERK at mitochondria-endoplasmic reticulum contact sites, thereby providing a safe haven for mitochondrial protein translation during endoplasmic reticulum stress. Ability to inhibit EIF2AK3/PERK is independent of its ATPase activity. Also involved in the mitochondrial DNA damage response by promoting signaling between damaged genomes and the mitochondrial membrane, leading to activation of the integrated stress response (ISR). This chain is ATPase family AAA domain-containing protein 3A (Atad3a), found in Rattus norvegicus (Rat).